The primary structure comprises 215 residues: tRNA (guanine-N(7)-)-methyltransferase (215 aa).

Residues Glu43, Glu68, Asp95, and Asp117 each coordinate S-adenosyl-L-methionine. The active site involves Asp117. Residues Lys121, Asp153, and Thr190–Glu193 contribute to the substrate site.

This sequence belongs to the class I-like SAM-binding methyltransferase superfamily. TrmB family.

The catalysed reaction is guanosine(46) in tRNA + S-adenosyl-L-methionine = N(7)-methylguanosine(46) in tRNA + S-adenosyl-L-homocysteine. It functions in the pathway tRNA modification; N(7)-methylguanine-tRNA biosynthesis. In terms of biological role, catalyzes the formation of N(7)-methylguanine at position 46 (m7G46) in tRNA. In Staphylococcus epidermidis (strain ATCC 35984 / DSM 28319 / BCRC 17069 / CCUG 31568 / BM 3577 / RP62A), this protein is tRNA (guanine-N(7)-)-methyltransferase.